The primary structure comprises 1396 residues: DNA-directed RNA polymerase subunit beta' (1396 aa).

Positions 70, 72, 85, and 88 each coordinate Zn(2+). Residues Asp-460, Asp-462, and Asp-464 each coordinate Mg(2+). Positions 814, 889, 896, and 899 each coordinate Zn(2+).

This sequence belongs to the RNA polymerase beta' chain family. In terms of assembly, the RNAP catalytic core consists of 2 alpha, 1 beta, 1 beta' and 1 omega subunit. When a sigma factor is associated with the core the holoenzyme is formed, which can initiate transcription. Requires Mg(2+) as cofactor. It depends on Zn(2+) as a cofactor.

The catalysed reaction is RNA(n) + a ribonucleoside 5'-triphosphate = RNA(n+1) + diphosphate. In terms of biological role, DNA-dependent RNA polymerase catalyzes the transcription of DNA into RNA using the four ribonucleoside triphosphates as substrates. The sequence is that of DNA-directed RNA polymerase subunit beta' from Hahella chejuensis (strain KCTC 2396).